The sequence spans 421 residues: MDLETKVKKMGLGHGQGFGAPCLKCKEKCEGFELHFWRKICRNCKCGQEEHDVLLSNEEDRKVGKLFEDTKYTTLIAKLKSDGIPMYKRNVMILTNPVAAKKNISINTVTYEWAPPVQNQALARQYMQMLPKEKQPVAGSEGAQYRKKQLAKQLPAHDQDPSKCHELSPKEVKEMEQFVKKYKNEALGVGDVKLPREMDAQDPNRMCIPGGDRSTTAAVGAKENKLAENKRTQYSCYCCNLSMKEGDPAIYAERAGYDKLWHPACFVCSTCHELLVDMIYFWKNGKLYCGRHYCDSEKPRCAGCDELIFSNEYTQAENQNWHLKHFCCFDCDSILAGEIYVMVNDKPVCKPCYVKNHAVVCQGCHNAIDPEVQRVTYNNFSWHASTECFLCSCCSKCLIGQKFMPVEGMVFCSVECKKMMS.

One can recognise a PET domain in the interval Met92 to Asp199. The disordered stretch occupies residues Glu133–Cys164. Basic and acidic residues predominate over residues Pro155–Cys164. LIM zinc-binding domains are found at residues Tyr234 to Glu297, Pro299 to Val359, and Gln362 to Ser421.

This sequence belongs to the prickle / espinas / testin family. As to quaternary structure, interacts via LIM domain 1 with ZYX. Interacts (via LIM domain 3) with ENAH and VASP. Interacts with ALKBH4, talin, actin, alpha-actinin, GRIP1 and PXN. Interacts (via LIM domain 2) with ACTL7A (via N-terminus). Heterodimer with ACTL7A; the heterodimer interacts with ENAH to form a heterotrimer.

The protein localises to the cytoplasm. It localises to the cell junction. It is found in the focal adhesion. Scaffold protein that may play a role in cell adhesion, cell spreading and in the reorganization of the actin cytoskeleton. Plays a role in the regulation of cell proliferation. May act as a tumor suppressor. This chain is Testin (TES), found in Equus caballus (Horse).